Here is a 621-residue protein sequence, read N- to C-terminus: UvrABC system protein C (621 aa).

Residues T11–I90 enclose the GIY-YIG domain. The 36-residue stretch at K200–T235 folds into the UVR domain.

Belongs to the UvrC family. Interacts with UvrB in an incision complex.

Its subcellular location is the cytoplasm. The UvrABC repair system catalyzes the recognition and processing of DNA lesions. UvrC both incises the 5' and 3' sides of the lesion. The N-terminal half is responsible for the 3' incision and the C-terminal half is responsible for the 5' incision. This Lawsonia intracellularis (strain PHE/MN1-00) protein is UvrABC system protein C.